A 130-amino-acid polypeptide reads, in one-letter code: Small ribosomal subunit protein uS8 (130 aa).

Belongs to the universal ribosomal protein uS8 family. In terms of assembly, part of the 30S ribosomal subunit. Contacts proteins S5 and S12.

One of the primary rRNA binding proteins, it binds directly to 16S rRNA central domain where it helps coordinate assembly of the platform of the 30S subunit. This chain is Small ribosomal subunit protein uS8, found in Vibrio campbellii (strain ATCC BAA-1116).